A 503-amino-acid chain; its full sequence is Major facilitator superfamily domain-containing protein 4A (503 aa).

Helical transmembrane passes span 19–39 (LTYWSVFFSFGLCIAFLGPTL), 53–73 (ITWVFFAQQFCLLVGSTLGGV), 82–102 (LFLLFLSSLTISVVFVIIPFC), 105–125 (VGVLALVMAIAGLAMGCIDTI), 139–159 (AIFLQVLHFFVGFGALLSPLI), 214–234 (YAFWIMAAINLPVPVAVFYLI), 289–309 (IWNAPFTFFAIHMCAAVTLFM), 338–358 (GYLPSLFWAFITLGRLISIPV), 366–386 (SMLFINLIGVTATFLFLLLSQ), 392–412 (MFVGTALLGLWLSSVFPSMLA), 427–447 (VLVTGAGMGEMVLQILVGSVM), and 455–475 (FLVCGICLSSLAFTLYAVLLV). The disordered stretch occupies residues 484–503 (SEDSACKPPGLDGEATSYQS).

The protein belongs to the major facilitator superfamily.

The protein localises to the membrane. In Xenopus tropicalis (Western clawed frog), this protein is Major facilitator superfamily domain-containing protein 4A (mfsd4a).